The primary structure comprises 208 residues: Ciliary-associated calcium-binding coiled-coil protein 1 (208 aa).

In terms of tissue distribution, testis-specific. Expressed in spermatocytes and round spermatids (at protein level).

It localises to the cytoplasm. The protein resides in the cytoskeleton. It is found in the microtubule organizing center. Its subcellular location is the centrosome. The protein localises to the cell projection. It localises to the cilium. The protein resides in the flagellum. In terms of biological role, calcium-binding protein. May be involved in the control of sperm flagellar movement. This chain is Ciliary-associated calcium-binding coiled-coil protein 1, found in Mus musculus (Mouse).